A 744-amino-acid polypeptide reads, in one-letter code: Biotin sulfoxide reductase (744 aa).

Residue Ser121 coordinates Mo-bis(molybdopterin guanine dinucleotide).

Belongs to the prokaryotic molybdopterin-containing oxidoreductase family. Mo-bis(molybdopterin guanine dinucleotide) serves as cofactor.

This enzyme may serve as a scavenger, allowing the cell to utilize biotin sulfoxide as a biotin source. It reduces a spontaneous oxidation product of biotin, D-biotin D-sulfoxide (BSO or BDS), back to biotin. The polypeptide is Biotin sulfoxide reductase (Cereibacter sphaeroides (Rhodobacter sphaeroides)).